The chain runs to 30 residues: Bacteriocin curvaticin (30 aa).

A disulfide bridge links Cys-9 with Cys-14.

It localises to the secreted. In terms of biological role, has antibacterial activity against the Gram-positive bacterium L.monocytogenes. The sequence is that of Bacteriocin curvaticin from Latilactobacillus curvatus (Lactobacillus curvatus).